We begin with the raw amino-acid sequence, 284 residues long: GPN-loop GTPase 3 (284 aa).

Position 13 to 18 (13 to 18) interacts with GTP; that stretch reads GSGKST. Residues 72–74 carry the Gly-Pro-Asn (GPN)-loop; involved in dimer interface motif; sequence GPN. Position 174-177 (174-177) interacts with GTP; that stretch reads TKMD.

This sequence belongs to the GPN-loop GTPase family. Heterodimer with GPN1. Binds to RNA polymerase II (RNAPII). Interacts directly with subunits RPB4 and RPB7 and the CTD of RPB1.

In terms of biological role, small GTPase required for proper localization of RNA polymerase II (RNAPII). May act at an RNAP assembly step prior to nuclear import. The protein is GPN-loop GTPase 3 of Homo sapiens (Human).